Reading from the N-terminus, the 192-residue chain is Thymidine kinase (192 aa).

Residues 9–16 (SAMNAGKS) and 87–90 (DECQ) contribute to the ATP site. Catalysis depends on Glu88, which acts as the Proton acceptor. Residues Cys145, Cys147, Cys182, and His185 each contribute to the Zn(2+) site.

Belongs to the thymidine kinase family. As to quaternary structure, homotetramer.

Its subcellular location is the cytoplasm. The enzyme catalyses thymidine + ATP = dTMP + ADP + H(+). The sequence is that of Thymidine kinase from Aliivibrio fischeri (strain ATCC 700601 / ES114) (Vibrio fischeri).